The primary structure comprises 351 residues: Protein Maqu_2141 (351 aa).

This sequence belongs to the proline racemase family.

Its function is as follows. Displays neither proline racemase activity nor trans-4-hydroxy-L-proline (t4LHyp) epimerase activity nor t3LHyp dehydratase activity. This chain is Protein Maqu_2141, found in Marinobacter nauticus (strain ATCC 700491 / DSM 11845 / VT8) (Marinobacter aquaeolei).